Reading from the N-terminus, the 496-residue chain is NAD(P)H-quinone oxidoreductase subunit 2 A, chloroplastic (496 aa).

A run of 14 helical transmembrane segments spans residues 13–33 (SILP…IDLL), 41–61 (TFWS…ILLL), 83–103 (IFRF…VDYI), 110–130 (VTEF…LCGA), 133–153 (LISI…LSGY), 168–188 (LLMG…PYGL), 213–233 (VSIA…LVPF), 245–265 (PTPV…ALAT), 279–299 (WHLP…LIAV), 307–327 (MLAY…IAGD), 338–358 (YMLI…SFGL), 380–400 (LSLV…GFFG), 413–435 (LYFL…SRII), and 470–490 (MILC…IIAI).

This sequence belongs to the complex I subunit 2 family. NDH is composed of at least 16 different subunits, 5 of which are encoded in the nucleus.

The protein resides in the plastid. The protein localises to the chloroplast thylakoid membrane. It catalyses the reaction a plastoquinone + NADH + (n+1) H(+)(in) = a plastoquinol + NAD(+) + n H(+)(out). It carries out the reaction a plastoquinone + NADPH + (n+1) H(+)(in) = a plastoquinol + NADP(+) + n H(+)(out). In terms of biological role, NDH shuttles electrons from NAD(P)H:plastoquinone, via FMN and iron-sulfur (Fe-S) centers, to quinones in the photosynthetic chain and possibly in a chloroplast respiratory chain. The immediate electron acceptor for the enzyme in this species is believed to be plastoquinone. Couples the redox reaction to proton translocation, and thus conserves the redox energy in a proton gradient. The chain is NAD(P)H-quinone oxidoreductase subunit 2 A, chloroplastic from Psilotum nudum (Whisk fern).